We begin with the raw amino-acid sequence, 281 residues long: Probable endonuclease 4 (281 aa).

The Zn(2+) site is built by His67, His107, Glu142, Asp176, His179, His211, Asp224, His226, and Glu256.

This sequence belongs to the AP endonuclease 2 family. Requires Zn(2+) as cofactor.

The enzyme catalyses Endonucleolytic cleavage to 5'-phosphooligonucleotide end-products.. Its function is as follows. Endonuclease IV plays a role in DNA repair. It cleaves phosphodiester bonds at apurinic or apyrimidinic (AP) sites, generating a 3'-hydroxyl group and a 5'-terminal sugar phosphate. The protein is Probable endonuclease 4 of Alkaliphilus oremlandii (strain OhILAs) (Clostridium oremlandii (strain OhILAs)).